A 170-amino-acid chain; its full sequence is Adenine phosphoribosyltransferase (170 aa).

It belongs to the purine/pyrimidine phosphoribosyltransferase family. Homodimer.

The protein localises to the cytoplasm. It carries out the reaction AMP + diphosphate = 5-phospho-alpha-D-ribose 1-diphosphate + adenine. It functions in the pathway purine metabolism; AMP biosynthesis via salvage pathway; AMP from adenine: step 1/1. In terms of biological role, catalyzes a salvage reaction resulting in the formation of AMP, that is energically less costly than de novo synthesis. This Kosmotoga olearia (strain ATCC BAA-1733 / DSM 21960 / TBF 19.5.1) protein is Adenine phosphoribosyltransferase.